We begin with the raw amino-acid sequence, 363 residues long: UDP-N-acetylglucosamine--N-acetylmuramyl-(pentapeptide) pyrophosphoryl-undecaprenol N-acetylglucosamine transferase (363 aa).

UDP-N-acetyl-alpha-D-glucosamine-binding positions include 10–12 (TGG), Asn-124, Ser-195, Ile-250, and Gln-295.

It belongs to the glycosyltransferase 28 family. MurG subfamily.

Its subcellular location is the cell membrane. It carries out the reaction di-trans,octa-cis-undecaprenyl diphospho-N-acetyl-alpha-D-muramoyl-L-alanyl-D-glutamyl-meso-2,6-diaminopimeloyl-D-alanyl-D-alanine + UDP-N-acetyl-alpha-D-glucosamine = di-trans,octa-cis-undecaprenyl diphospho-[N-acetyl-alpha-D-glucosaminyl-(1-&gt;4)]-N-acetyl-alpha-D-muramoyl-L-alanyl-D-glutamyl-meso-2,6-diaminopimeloyl-D-alanyl-D-alanine + UDP + H(+). It participates in cell wall biogenesis; peptidoglycan biosynthesis. Functionally, cell wall formation. Catalyzes the transfer of a GlcNAc subunit on undecaprenyl-pyrophosphoryl-MurNAc-pentapeptide (lipid intermediate I) to form undecaprenyl-pyrophosphoryl-MurNAc-(pentapeptide)GlcNAc (lipid intermediate II). The sequence is that of UDP-N-acetylglucosamine--N-acetylmuramyl-(pentapeptide) pyrophosphoryl-undecaprenol N-acetylglucosamine transferase from Listeria monocytogenes serotype 4a (strain HCC23).